A 464-amino-acid chain; its full sequence is MNQTIHRVSPISMSISELTTLLSSGVSVFEIFAGLLVVHLIYQRIRTRVKVYLLDFTCYRAPDSNRVPMSTLIETIYLDDKLDQESIDFQARILERSWLSNQTSIPRSLMEIPLKKSLSSVKIETMTTIFTSVEDLLRKNKLSPRSIDILITNCSLHSPSPSLSAMVINKFHMRSNIKSFNLSGMGCAAGILSVNLANDLLQAHRGSLALIVSTEALNTHWYIGKDRSMLLTNCLFRMGAAAVLMSSNDHDRDNAKYELLHVVRKNKAKDDRAYRCIYQDIDSDEKQGVSITKDVISVAGDMLKMNLTSLGPLVLPYLEQFQYVIQHILCKKLKIYESNSSYTPNFKTAFEHFCIHTGGRAVIQAMEMNLKLTKVDIEPSKMTLHRFGNTSSSSIWYALSYLEAKRRMKKGDRVLQIAFGSGFKCNSAVWRCIRKVEPNTENKWLDFIDSYPVDVPDSTNIRPG.

Residues 21–41 (LLSSGVSVFEIFAGLLVVHLI) traverse the membrane as a helical segment. The FAE domain occupies 42 to 333 (YQRIRTRVKV…VIQHILCKKL (292 aa)). Active-site residues include Cys-187, His-352, His-356, His-385, and Asn-389.

The protein belongs to the thiolase-like superfamily. Chalcone/stilbene synthases family. Expressed in flowers.

It localises to the membrane. The catalysed reaction is a very-long-chain acyl-CoA + malonyl-CoA + H(+) = a very-long-chain 3-oxoacyl-CoA + CO2 + CoA. The protein operates within lipid metabolism; fatty acid biosynthesis. In Arabidopsis thaliana (Mouse-ear cress), this protein is Probable 3-ketoacyl-CoA synthase 21.